Consider the following 1166-residue polypeptide: DNA-directed RNA polymerase subunit beta (1166 aa).

This sequence belongs to the RNA polymerase beta chain family. In terms of assembly, the RNAP catalytic core consists of 2 alpha, 1 beta, 1 beta' and 1 omega subunit. When a sigma factor is associated with the core the holoenzyme is formed, which can initiate transcription.

The catalysed reaction is RNA(n) + a ribonucleoside 5'-triphosphate = RNA(n+1) + diphosphate. In terms of biological role, DNA-dependent RNA polymerase catalyzes the transcription of DNA into RNA using the four ribonucleoside triphosphates as substrates. The sequence is that of DNA-directed RNA polymerase subunit beta from Nocardioides sp. (strain ATCC BAA-499 / JS614).